Reading from the N-terminus, the 417-residue chain is Cobalamin binding intrinsic factor (417 aa).

The first 22 residues, 1 to 22 (MAWFSLHLLHLLWAAAGTSTWA), serve as a signal peptide directing secretion. Intrachain disulfides connect cysteine 26–cysteine 246, cysteine 103–cysteine 288, and cysteine 143–cysteine 182. N-linked (GlcNAc...) asparagine glycosylation is present at asparagine 100. Residue aspartate 171 participates in cob(II)alamin binding. Serine 191 is subject to Phosphoserine. The N-linked (GlcNAc...) asparagine glycan is linked to asparagine 209. Residues aspartate 222 and glutamine 270 each coordinate cob(II)alamin. Residues asparagine 311 and asparagine 330 are each glycosylated (N-linked (GlcNAc...) asparagine). Residues 365–370 (SWGLVV) and 386–395 (WQFLSGKTPL) each bind cob(II)alamin. Residue asparagine 413 is glycosylated (N-linked (GlcNAc...) asparagine).

The protein belongs to the eukaryotic cobalamin transport proteins family. As to quaternary structure, interacts with CUBN (via CUB domains).

The protein resides in the secreted. Promotes absorption of the essential vitamin cobalamin (Cbl) in the ileum. After interaction with CUBN, the CBLIF-cobalamin complex is internalized via receptor-mediated endocytosis. This is Cobalamin binding intrinsic factor (CBLIF) from Canis lupus familiaris (Dog).